Consider the following 284-residue polypeptide: Esterase alnB (284 aa).

Residues serine 93, aspartate 226, and histidine 255 each act as charge relay system in the active site.

This sequence belongs to the LovG family.

It functions in the pathway polyketide biosynthesis. In terms of biological role, esterase; part of the gene cluster that mediates the biosynthesis of asperlin, a polyketide showing anti-inflammatory, antitumor and antibiotic activities. The first step of the asperlin biosynthesis is the production of the intermediate 2,4,6-octatrienoic acid by the highly redusing polyketide synthase alnA with cleavage of the PKS product by the esterase alnB. 2,4,6-octatrienoic acid is further converted to asperlin via several steps involving the remaining enzymes from the cluster. This is Esterase alnB from Emericella nidulans (strain FGSC A4 / ATCC 38163 / CBS 112.46 / NRRL 194 / M139) (Aspergillus nidulans).